A 168-amino-acid chain; its full sequence is Plastocyanin, chloroplastic (168 aa).

The region spanning V70–N168 is the Plastocyanin-like domain. Residues H106, C153, H156, and M161 each contribute to the Cu cation site.

The protein belongs to the plastocyanin family. Cu(2+) serves as cofactor.

Its subcellular location is the plastid. The protein localises to the chloroplast thylakoid membrane. In terms of biological role, participates in electron transfer between P700 and the cytochrome b6-f complex in photosystem I. The sequence is that of Plastocyanin, chloroplastic (PETE) from Spinacia oleracea (Spinach).